A 77-amino-acid polypeptide reads, in one-letter code: U8-lycotoxin-Ls1u (77 aa).

The first 20 residues, 1–20 (MKLIIFTGLVLFAIVSLIEA), serve as a signal peptide directing secretion. A propeptide spanning residues 21-26 (QAENEK) is cleaved from the precursor.

It belongs to the neurotoxin 19 (CSTX) family. 08 (U8-Lctx) subfamily. In terms of processing, contains 4 disulfide bonds. In terms of tissue distribution, expressed by the venom gland.

The protein resides in the secreted. This Lycosa singoriensis (Wolf spider) protein is U8-lycotoxin-Ls1u.